Reading from the N-terminus, the 283-residue chain is Elongation factor Ts (283 aa).

The involved in Mg(2+) ion dislocation from EF-Tu stretch occupies residues 80–83 (TDFV).

It belongs to the EF-Ts family.

It localises to the cytoplasm. In terms of biological role, associates with the EF-Tu.GDP complex and induces the exchange of GDP to GTP. It remains bound to the aminoacyl-tRNA.EF-Tu.GTP complex up to the GTP hydrolysis stage on the ribosome. This is Elongation factor Ts from Haemophilus influenzae (strain PittGG).